A 107-amino-acid polypeptide reads, in one-letter code: YcgL domain-containing protein Psyc_0800 (107 aa).

Residues 1–95 form the YcgL domain; the sequence is MHCDIYKFLK…QDVMRRQAEL (95 aa).

The chain is YcgL domain-containing protein Psyc_0800 from Psychrobacter arcticus (strain DSM 17307 / VKM B-2377 / 273-4).